The chain runs to 397 residues: Succinate--CoA ligase [ADP-forming] subunit beta (397 aa).

Positions 9 to 254 (KALLRSYGAP…ETEEDPKELA (246 aa)) constitute an ATP-grasp domain. Residues K46, 53 to 55 (GRG), E109, S112, and E117 contribute to the ATP site. Mg(2+) is bound by residues N209 and D223. Residues N274 and 331 to 333 (GIM) each bind substrate.

The protein belongs to the succinate/malate CoA ligase beta subunit family. Heterotetramer of two alpha and two beta subunits. Mg(2+) serves as cofactor.

The enzyme catalyses succinate + ATP + CoA = succinyl-CoA + ADP + phosphate. It carries out the reaction GTP + succinate + CoA = succinyl-CoA + GDP + phosphate. Its pathway is carbohydrate metabolism; tricarboxylic acid cycle; succinate from succinyl-CoA (ligase route): step 1/1. Succinyl-CoA synthetase functions in the citric acid cycle (TCA), coupling the hydrolysis of succinyl-CoA to the synthesis of either ATP or GTP and thus represents the only step of substrate-level phosphorylation in the TCA. The beta subunit provides nucleotide specificity of the enzyme and binds the substrate succinate, while the binding sites for coenzyme A and phosphate are found in the alpha subunit. This chain is Succinate--CoA ligase [ADP-forming] subunit beta, found in Cereibacter sphaeroides (strain ATCC 17025 / ATH 2.4.3) (Rhodobacter sphaeroides).